The chain runs to 54 residues: UPF0391 membrane protein Pnap_0920 (54 aa).

The next 2 membrane-spanning stretches (helical) occupy residues 6-26 (VVFL…IAAG) and 30-50 (IAKI…VVSL).

It belongs to the UPF0391 family.

The protein localises to the cell membrane. The chain is UPF0391 membrane protein Pnap_0920 from Polaromonas naphthalenivorans (strain CJ2).